We begin with the raw amino-acid sequence, 270 residues long: Formamidopyrimidine-DNA glycosylase (270 aa).

The active-site Schiff-base intermediate with DNA is proline 2. The active-site Proton donor is the glutamate 3. The active-site Proton donor; for beta-elimination activity is lysine 58. The DNA site is built by histidine 91, arginine 110, and arginine 151. An FPG-type zinc finger spans residues 236–270; it reads FVYGRGGQPCKVCGTELREVKLGQRASVYCPRCQR. The Proton donor; for delta-elimination activity role is filled by arginine 260.

It belongs to the FPG family. Monomer. The cofactor is Zn(2+).

The catalysed reaction is Hydrolysis of DNA containing ring-opened 7-methylguanine residues, releasing 2,6-diamino-4-hydroxy-5-(N-methyl)formamidopyrimidine.. It catalyses the reaction 2'-deoxyribonucleotide-(2'-deoxyribose 5'-phosphate)-2'-deoxyribonucleotide-DNA = a 3'-end 2'-deoxyribonucleotide-(2,3-dehydro-2,3-deoxyribose 5'-phosphate)-DNA + a 5'-end 5'-phospho-2'-deoxyribonucleoside-DNA + H(+). Functionally, involved in base excision repair of DNA damaged by oxidation or by mutagenic agents. Acts as a DNA glycosylase that recognizes and removes damaged bases. Has a preference for oxidized purines, such as 7,8-dihydro-8-oxoguanine (8-oxoG). Has AP (apurinic/apyrimidinic) lyase activity and introduces nicks in the DNA strand. Cleaves the DNA backbone by beta-delta elimination to generate a single-strand break at the site of the removed base with both 3'- and 5'-phosphates. This is Formamidopyrimidine-DNA glycosylase from Pseudomonas putida (strain ATCC 700007 / DSM 6899 / JCM 31910 / BCRC 17059 / LMG 24140 / F1).